Here is a 143-residue protein sequence, read N- to C-terminus: Large ribosomal subunit protein uL13 (143 aa).

This sequence belongs to the universal ribosomal protein uL13 family. As to quaternary structure, part of the 50S ribosomal subunit.

Functionally, this protein is one of the early assembly proteins of the 50S ribosomal subunit, although it is not seen to bind rRNA by itself. It is important during the early stages of 50S assembly. The protein is Large ribosomal subunit protein uL13 of Dehalococcoides mccartyi (strain ATCC BAA-2266 / KCTC 15142 / 195) (Dehalococcoides ethenogenes (strain 195)).